The primary structure comprises 463 residues: L-seryl-tRNA(Sec) selenium transferase (463 aa).

Lys295 carries the N6-(pyridoxal phosphate)lysine modification.

Belongs to the SelA family. Homodecamer; pentamer of dimers. Binds only one seryl-tRNA(Sec) per dimer. It depends on pyridoxal 5'-phosphate as a cofactor.

Its subcellular location is the cytoplasm. The catalysed reaction is L-seryl-tRNA(Sec) + selenophosphate + H(+) = L-selenocysteinyl-tRNA(Sec) + phosphate. It participates in aminoacyl-tRNA biosynthesis; selenocysteinyl-tRNA(Sec) biosynthesis; selenocysteinyl-tRNA(Sec) from L-seryl-tRNA(Sec) (bacterial route): step 1/1. In terms of biological role, converts seryl-tRNA(Sec) to selenocysteinyl-tRNA(Sec) required for selenoprotein biosynthesis. This chain is L-seryl-tRNA(Sec) selenium transferase, found in Shigella flexneri.